We begin with the raw amino-acid sequence, 104 residues long: AVIToxin-VAR2 (104 aa).

A signal peptide spans 1-19 (MRSLLCAPLLLLLLSAGES). 5 disulfides stabilise this stretch: Cys-26/Cys-38, Cys-32/Cys-50, Cys-37/Cys-78, Cys-60/Cys-86, and Cys-80/Cys-96.

Belongs to the AVIT (prokineticin) family. In terms of tissue distribution, expressed by the venom gland.

The protein resides in the secreted. In terms of biological role, potent agonist for both PKR1/PROKR1 and PKR2/PROKR2. Potently contracts gastrointestinal (GI) smooth muscle. The polypeptide is AVIToxin-VAR2 (Varanus varius (Lace monitor lizard)).